A 483-amino-acid chain; its full sequence is NADH-quinone oxidoreductase subunit N (483 aa).

14 consecutive transmembrane segments (helical) span residues 8–28 (INLA…GLLL), 45–65 (IAAG…GATQ), 78–98 (FAAF…VVSW), 106–126 (LGNG…MFMI), 131–151 (FLVL…LAAY), 166–186 (FVLG…IYGV), 206–226 (MLGI…KIAA), 241–261 (PTSV…AALF), 275–295 (WGPI…LAGL), 303–323 (LLAY…AVGN), 330–350 (VLVY…LILV), 373–393 (LALL…LAGF), 399–419 (IFMA…VLFS), and 452–472 (AIVG…GSLM).

The protein belongs to the complex I subunit 2 family. As to quaternary structure, NDH-1 is composed of 14 different subunits. Subunits NuoA, H, J, K, L, M, N constitute the membrane sector of the complex.

The protein resides in the cell inner membrane. It catalyses the reaction a quinone + NADH + 5 H(+)(in) = a quinol + NAD(+) + 4 H(+)(out). NDH-1 shuttles electrons from NADH, via FMN and iron-sulfur (Fe-S) centers, to quinones in the respiratory chain. The immediate electron acceptor for the enzyme in this species is believed to be ubiquinone. Couples the redox reaction to proton translocation (for every two electrons transferred, four hydrogen ions are translocated across the cytoplasmic membrane), and thus conserves the redox energy in a proton gradient. The chain is NADH-quinone oxidoreductase subunit N from Magnetococcus marinus (strain ATCC BAA-1437 / JCM 17883 / MC-1).